The chain runs to 338 residues: MIEADRLIHAEPQGPEERDEQIDRAMRPKLLDEYTGQDDTRAQLKIFIKAAQNRGEALDHMLIYGPPGLGKTTLAMIVANEMGVNIKSTSGPVLEKAGDLAALLTNLEPGDVLFIDEIHRLSSVVEEILYPAMEDYQLDIMIGEGPAARSIKLDLPPFTLIGATTRAGALTSPLRARFGIPLRLEFYNTKDLSSIVSRSANVLELPIDDEGAIELAKRSRGTPRIANRLLRRVRDFAEVKHDGEINKAVADLALDMLDIDSEGFDYMDRKLLLAIIDKFMGGPVGLDNLAAAIGEERETIEDVLEPFLIQQGFIQRTPRGRIATDRAYRHFDIIQPEK.

The tract at residues 1 to 22 (MIEADRLIHAEPQGPEERDEQI) is disordered. A large ATPase domain (RuvB-L) region spans residues 4–187 (ADRLIHAEPQ…FGIPLRLEFY (184 aa)). ATP contacts are provided by residues arginine 27, glycine 68, lysine 71, threonine 72, threonine 73, 134 to 136 (EDY), arginine 177, tyrosine 187, and arginine 224. Threonine 72 is a Mg(2+) binding site. A small ATPAse domain (RuvB-S) region spans residues 188 to 258 (NTKDLSSIVS…VADLALDMLD (71 aa)). Residues 261–338 (SEGFDYMDRK…RHFDIIQPEK (78 aa)) form a head domain (RuvB-H) region. DNA-binding residues include arginine 297, arginine 316, and arginine 321.

This sequence belongs to the RuvB family. As to quaternary structure, homohexamer. Forms an RuvA(8)-RuvB(12)-Holliday junction (HJ) complex. HJ DNA is sandwiched between 2 RuvA tetramers; dsDNA enters through RuvA and exits via RuvB. An RuvB hexamer assembles on each DNA strand where it exits the tetramer. Each RuvB hexamer is contacted by two RuvA subunits (via domain III) on 2 adjacent RuvB subunits; this complex drives branch migration. In the full resolvosome a probable DNA-RuvA(4)-RuvB(12)-RuvC(2) complex forms which resolves the HJ.

It localises to the cytoplasm. The enzyme catalyses ATP + H2O = ADP + phosphate + H(+). In terms of biological role, the RuvA-RuvB-RuvC complex processes Holliday junction (HJ) DNA during genetic recombination and DNA repair, while the RuvA-RuvB complex plays an important role in the rescue of blocked DNA replication forks via replication fork reversal (RFR). RuvA specifically binds to HJ cruciform DNA, conferring on it an open structure. The RuvB hexamer acts as an ATP-dependent pump, pulling dsDNA into and through the RuvAB complex. RuvB forms 2 homohexamers on either side of HJ DNA bound by 1 or 2 RuvA tetramers; 4 subunits per hexamer contact DNA at a time. Coordinated motions by a converter formed by DNA-disengaged RuvB subunits stimulates ATP hydrolysis and nucleotide exchange. Immobilization of the converter enables RuvB to convert the ATP-contained energy into a lever motion, pulling 2 nucleotides of DNA out of the RuvA tetramer per ATP hydrolyzed, thus driving DNA branch migration. The RuvB motors rotate together with the DNA substrate, which together with the progressing nucleotide cycle form the mechanistic basis for DNA recombination by continuous HJ branch migration. Branch migration allows RuvC to scan DNA until it finds its consensus sequence, where it cleaves and resolves cruciform DNA. The protein is Holliday junction branch migration complex subunit RuvB of Shewanella sediminis (strain HAW-EB3).